Here is a 220-residue protein sequence, read N- to C-terminus: MKELTMLSLSFFFVSALLAAAANPLLSAADSAPNPVLDIDGEKLRTGTNYYIVPVLRDHGGGLTVSATTPNGTFVCPPRVVQTRKEVDHDRPLAFFPENPKEDVVRVSTDLNINFSAFMPCRWTSSTVWRLDKYDESTGQYFVTIGGVKGNPGPETISSWFKIEEFCGSGFYKLVFCPTVCGSCKVKCGDVGIYIDQKGRRRLALSDKPFAFEFNKTVYF.

Residues methionine 1–alanine 29 form the signal peptide. An N-linked (GlcNAc...) asparagine glycan is attached at asparagine 71. Disulfide bonds link cysteine 76–cysteine 121, cysteine 177–cysteine 188, and cysteine 181–cysteine 184. Asparagine 215 is a glycosylation site (N-linked (GlcNAc...) asparagine).

The protein belongs to the protease inhibitor I3 (leguminous Kunitz-type inhibitor) family. As to quaternary structure, homotetramer; dimer of homodimer. Glycosylated; contains as much as 13,9% of sugars (glucosamine, mannose, galactose, xylose, and fucose). Expressed in fruit pulp after pollination. Not expressed in seeds, stems or leaves.

Its function is as follows. Miraculin has the property of modifying a sour taste into a sweet taste. This alteration of taste perception persists for many minutes. The protein is Miraculin of Synsepalum dulcificum (Miracle fruit).